Here is a 589-residue protein sequence, read N- to C-terminus: Serine/threonine-protein kinase STE7 homolog (589 aa).

Residues 1–18 (MTRTTRIDTQEATKHKDL) show a composition bias toward basic and acidic residues. 2 disordered regions span residues 1–162 (MTRT…DPDN) and 185–232 (RQHY…PASS). The segment covering 24–33 (PLSLSSNPNP) has biased composition (low complexity). A compositionally biased stretch (polar residues) spans 57-69 (VKSTSGSLRSSDM). Residues 92 to 121 (PTASSSATSTPTSNITGSSSASSIQFAQKS) are compositionally biased toward low complexity. 2 stretches are compositionally biased toward polar residues: residues 127–136 (IVSQTLSRPS) and 144–162 (SGYS…DPDN). The span at 185 to 203 (RQHYQNSHHHLPTTNRKRQ) shows a compositional bias: basic residues. Residues 206 to 220 (ISSISPTKSSAASSP) show a composition bias toward low complexity. The Protein kinase domain maps to 249-565 (LLTLKQLGSG…QLLEDKEHFF (317 aa)). ATP-binding positions include 255–263 (LGSGNSGSV) and lysine 278. Aspartate 374 acts as the Proton acceptor in catalysis. Phosphoserine is present on serine 402. Position 408 is a phosphothreonine (threonine 408). The disordered stretch occupies residues 473–499 (IAAERNGQNSPSRSRKNKQKGNGYNSY).

Belongs to the protein kinase superfamily. STE Ser/Thr protein kinase family. MAP kinase kinase subfamily.

It carries out the reaction L-seryl-[protein] + ATP = O-phospho-L-seryl-[protein] + ADP + H(+). The catalysed reaction is L-threonyl-[protein] + ATP = O-phospho-L-threonyl-[protein] + ADP + H(+). It catalyses the reaction L-tyrosyl-[protein] + ATP = O-phospho-L-tyrosyl-[protein] + ADP + H(+). This Candida albicans (strain WO-1) (Yeast) protein is Serine/threonine-protein kinase STE7 homolog (HST7).